The chain runs to 176 residues: Sigma intracellular receptor 2 (176 aa).

Topologically, residues Met-1–Cys-9 are cytoplasmic. Residues Val-10 to Leu-30 form a helical membrane-spanning segment. In terms of domain architecture, EXPERA spans Val-10 to Leu-158. At Gln-31–Ser-68 the chain is on the lumenal side. Residues Phe-69 to Phe-89 form a helical membrane-spanning segment. Positions 75 and 77 each coordinate cholesterol. Over Lys-90 to Pro-99 the chain is Cytoplasmic. The chain crosses the membrane as a helical span at residues Ala-100–Phe-120. Residues Glu-121 to Arg-140 are Lumenal-facing. The chain crosses the membrane as a helical span at residues Leu-141–Met-161. The Cytoplasmic portion of the chain corresponds to Leu-162–Lys-176. Residues Lys-172 to Lys-176 carry the ER retention motif motif.

Belongs to the TMEM97/sigma-2 receptor family. Homodimer. Interacts with NPC1; the interaction impairs NPC1-mediated cholesterol transport. Interacts with PGRMC1 and LDLR; the interaction increases LDL internalization. Interacts with histatin 1/HTN1; the interaction induces HTN1-stimulating wound healing. Interacts with TSPO.

Its subcellular location is the rough endoplasmic reticulum membrane. The protein localises to the nucleus membrane. Its function is as follows. Sigma-2 receptor which contributes to ameliorate dysfunctional cellular processes and slow degenerative progression by regulating cell functions including cholesterol biosynthesis/trafficking, membrane trafficking, autophagy, lipid membrane-bound protein trafficking, and receptor stabilization at the cell surface. Forms a ternary complex with PGRMC1 receptor and low density lipoprotein receptor/LDLR at the plasma membrane, which increases LDLR-mediated LDL cholesterol internalization. Decreases lysosomal sterol transporter NPC1 availability to the cell, probably through NPC1-binding, hence controlling lipid transport, including cholesterol and LBPA, outside of late endosome/lysosome. Binds regio- and stereoselective ligand 20(S)-hydroxycholesterol (20(S)-OHC) which enhances TMEM97-NPC1 interaction and decreases TMEM97-PGRMC1 and TMEM97-TSPO interactions, thereby linking OHC binding to cholesterol homeostasis. Also able to bind cholesterol. Binds histatin 1 (Hst 1)/HN1 salivary peptide at the ER membrane, which is critical for increasing mitochondria-ER contacts and stimulating Hst1 wound healing properties. May alter the activity of some cytochrome P450 proteins. Although shows homologies with sterol isomerases (EXPERA domain), not able to catalyze sterol isomerization. However, may act as sensors of these molecules. Acts as a quality control factor in the ER, promoting the proteolytic degradation of nonproductive and extramitochondrial precursor proteins in the ER membrane thus removing them from the ER surface. This Mus musculus (Mouse) protein is Sigma intracellular receptor 2.